A 300-amino-acid polypeptide reads, in one-letter code: Nucleotide-binding protein MCCL_0516 (300 aa).

15–22 (GMSGAGKS) contributes to the ATP binding site. 66–69 (DLRG) is a binding site for GTP.

It belongs to the RapZ-like family.

Its function is as follows. Displays ATPase and GTPase activities. This is Nucleotide-binding protein MCCL_0516 from Macrococcus caseolyticus (strain JCSC5402) (Macrococcoides caseolyticum).